The primary structure comprises 204 residues: N-(5'-phosphoribosyl)anthranilate isomerase (204 aa).

Belongs to the TrpF family.

It carries out the reaction N-(5-phospho-beta-D-ribosyl)anthranilate = 1-(2-carboxyphenylamino)-1-deoxy-D-ribulose 5-phosphate. It functions in the pathway amino-acid biosynthesis; L-tryptophan biosynthesis; L-tryptophan from chorismate: step 3/5. The protein is N-(5'-phosphoribosyl)anthranilate isomerase of Bacillus cereus (strain G9842).